Consider the following 383-residue polypeptide: MTRAVALTGRLTFRPGQVPGIAGERPQLAERLLRGRPGEAAPHLLPRLFALCGEAHGVTAALAVNAALGRVAAPEPALFRRLAHETACEHIRRIWLDWPLHLASGPVPSTFNSRVPQRELIDCPMLKASHSESAAMLAWLERAVLGTAPRRWLAHWHEDPAGCLSTWATKIHTWPAMAMRQCMQVAQAMASMPAPLLPHASTDALRELAQSLAGEADFPCRPSWQGRVFETGSWTRLGLADCSAFGNMWLRLGARIAELVLLSLRDGMQASGEAHDSPCLQMGALALAPGQALAWSEMARGLLMHWVRLVDTPQGPVIGGYRIIAPTEWNFHPDGAVAHMLAHLAPFDAADVRRSIGILVAAYDPCVPYTVEFAESLGDTVHA.

The polypeptide is Hydrogenase expression/formation protein HoxV (hoxV) (Cupriavidus necator (strain ATCC 17699 / DSM 428 / KCTC 22496 / NCIMB 10442 / H16 / Stanier 337) (Ralstonia eutropha)).